The primary structure comprises 582 residues: DNA polymerase IV (582 aa).

The disordered stretch occupies residues 127–161; it reads NADDGQSSTDKESEISTDVESERNDDSNNKDMIQA. Basic and acidic residues predominate over residues 135–155; the sequence is TDKESEISTDVESERNDDSNN. The interval 360–369 is involved in ssDNA binding; the sequence is RGYSKCGDID. The Mg(2+) site is built by aspartate 367, aspartate 369, and aspartate 502.

Belongs to the DNA polymerase type-X family. In terms of assembly, interacts with DNL4 subunit of the DNL4-LIF1 complex. Requires Mg(2+) as cofactor.

It is found in the nucleus. It catalyses the reaction DNA(n) + a 2'-deoxyribonucleoside 5'-triphosphate = DNA(n+1) + diphosphate. Its activity is regulated as follows. Stimulated by the interaction with the DNL4-LIF1 complex. Repair polymerase. Involved in gap-filling in DNA nonhomologous end joining (NHEJ) required for double-strand break repair. Seems to conduct DNA synthesis in a stepwise distributive fashion rather than in a processive fashion as for other DNA polymerases. Preferentially acts upon short gaps formed by the alignment of linear duplexes with complementary single-strand ends. Required for filling gaps that need removal of a 5'- or 3'-terminal mismatch, however lacks nuclease activities. The chain is DNA polymerase IV (POL4) from Saccharomyces cerevisiae (strain ATCC 204508 / S288c) (Baker's yeast).